Reading from the N-terminus, the 235-residue chain is Probable carboxylesterase Os04g0669600 (235 aa).

Catalysis depends on charge relay system residues S113, D167, and H199.

The protein belongs to the AB hydrolase superfamily. AB hydrolase 2 family.

Possesses carboxylesterase activity in vitro. The sequence is that of Probable carboxylesterase Os04g0669600 from Oryza sativa subsp. japonica (Rice).